The following is a 515-amino-acid chain: Rop guanine nucleotide exchange factor 12 (515 aa).

One can recognise a PRONE domain in the interval 83–446 (QARERQLLAD…RAGNKRNTPL (364 aa)). A Phosphoserine modification is found at S510.

Interacts (via C-terminus) with PRK2. Interacts with PRK6. As to expression, expressed in pollen grains.

Its subcellular location is the cytoplasm. The protein resides in the cell membrane. Its activity is regulated as follows. Phosphorylation at Ser-510 by PRK2 may release ROPGEF12 auto-inhibition, thereby activating ROPGEF12 and downstream Rop signaling. Functionally, guanine-nucleotide exchange factor (GEF) that acts as an activator of Rop (Rho of plants) GTPases by promoting the exchange of GDP for GTP. May be recruited by PRK2 at the plasma membrane to maintain polar Rop activity in the pollen tube and control polarized pollen tube growth. The sequence is that of Rop guanine nucleotide exchange factor 12 from Arabidopsis thaliana (Mouse-ear cress).